A 904-amino-acid chain; its full sequence is E3 ubiquitin-protein ligase HACE1 (904 aa).

7 ANK repeats span residues 34–63 (AVYT…DVNY), 68–97 (VKRS…NPNY), 101–130 (SGCT…DVNI), 134–163 (EGLT…NVDV), 167–196 (MGQT…DINR), 200–230 (SGAT…YLPD), and 232–261 (NGVT…RLFQ). The 336-residue stretch at 569 to 904 (SNEKLKQGIA…HCGSYGYTMA (336 aa)) folds into the HECT domain. The active-site Glycyl thioester intermediate is the C871.

It is found in the golgi apparatus. It localises to the golgi stack membrane. The protein resides in the cytoplasm. Its subcellular location is the endoplasmic reticulum. It carries out the reaction S-ubiquitinyl-[E2 ubiquitin-conjugating enzyme]-L-cysteine + [acceptor protein]-L-lysine = [E2 ubiquitin-conjugating enzyme]-L-cysteine + N(6)-ubiquitinyl-[acceptor protein]-L-lysine.. It functions in the pathway protein modification; protein ubiquitination. Its function is as follows. E3 ubiquitin-protein ligase involved in Golgi membrane fusion and regulation of small GTPases. Acts as a regulator of Golgi membrane dynamics during the cell cycle: recruited to Golgi membrane by Rab proteins and regulates postmitotic Golgi membrane fusion. Acts by mediating ubiquitination during mitotic Golgi disassembly, ubiquitination serving as a signal for Golgi reassembly later, after cell division. The chain is E3 ubiquitin-protein ligase HACE1 (hace1) from Danio rerio (Zebrafish).